A 238-amino-acid chain; its full sequence is Sugar fermentation stimulation protein homolog (238 aa).

This sequence belongs to the SfsA family.

In Vibrio vulnificus (strain YJ016), this protein is Sugar fermentation stimulation protein homolog.